The following is a 1199-amino-acid chain: Putative pyruvate-flavodoxin oxidoreductase (1199 aa).

4Fe-4S ferredoxin-type domains lie at 681-710 (EIPV…GKVY) and 737-766 (FTIQ…QPRL). C690, C693, C696, C700, C746, C749, C752, C756, C820, C823, C848, and C1079 together coordinate [4Fe-4S] cluster.

It belongs to the pyruvate:ferredoxin/flavodoxin oxidoreductase family. It depends on [4Fe-4S] cluster as a cofactor.

The catalysed reaction is oxidized [flavodoxin] + pyruvate + CoA + 2 H(+) = reduced [flavodoxin] + acetyl-CoA + CO2. Oxidoreductase required for the transfer of electrons from pyruvate to flavodoxin. The polypeptide is Putative pyruvate-flavodoxin oxidoreductase (nifJ) (Synechocystis sp. (strain ATCC 27184 / PCC 6803 / Kazusa)).